Reading from the N-terminus, the 126-residue chain is MAKYTNDELLEAFGEMTLVELSEFVKAFEEKFDVEAAAPVAAVAAAPAAGAAAEEEKDEFDVILSAVGDKKIQVIKAVRAITNLGLAEAKALVDGAPKAVLEKAKKEDAEKAKSQLEEAGATVELK.

A compositionally biased stretch (basic and acidic residues) spans 107 to 116 (EDAEKAKSQL). The disordered stretch occupies residues 107-126 (EDAEKAKSQLEEAGATVELK).

Belongs to the bacterial ribosomal protein bL12 family. In terms of assembly, homodimer. Part of the ribosomal stalk of the 50S ribosomal subunit. Forms a multimeric L10(L12)X complex, where L10 forms an elongated spine to which 2 to 4 L12 dimers bind in a sequential fashion. Binds GTP-bound translation factors.

Its function is as follows. Forms part of the ribosomal stalk which helps the ribosome interact with GTP-bound translation factors. Is thus essential for accurate translation. In Bifidobacterium adolescentis (strain ATCC 15703 / DSM 20083 / NCTC 11814 / E194a), this protein is Large ribosomal subunit protein bL12.